The chain runs to 116 residues: Anti-sigma F factor antagonist (116 aa).

The STAS domain maps to 3–113; the sequence is LAIDLEVKKD…ESEQYALHRL (111 aa). Serine 58 is subject to Phosphoserine.

Belongs to the anti-sigma-factor antagonist family. Phosphorylated by SpoIIAB on a serine residue.

Its function is as follows. In the phosphorylated form it could act as an anti-anti-sigma factor that counteracts SpoIIAB and thus releases sigma f from inhibition. This is Anti-sigma F factor antagonist (spoIIAA) from Heyndrickxia coagulans (Weizmannia coagulans).